An 891-amino-acid chain; its full sequence is DNA mismatch repair protein MutS (891 aa).

643–650 contributes to the ATP binding site; the sequence is GPNMGGKS.

This sequence belongs to the DNA mismatch repair MutS family.

In terms of biological role, this protein is involved in the repair of mismatches in DNA. It is possible that it carries out the mismatch recognition step. This protein has a weak ATPase activity. This Xanthomonas campestris pv. campestris (strain ATCC 33913 / DSM 3586 / NCPPB 528 / LMG 568 / P 25) protein is DNA mismatch repair protein MutS.